The chain runs to 185 residues: Ribonuclease M5 (185 aa).

The Toprim domain occupies 4 to 87 (KEIIVVEGKD…AFLPKEEALA (84 aa)). Mg(2+) is bound by residues glutamate 10, aspartate 56, and aspartate 58.

It belongs to the ribonuclease M5 family. Mg(2+) serves as cofactor.

It localises to the cytoplasm. It catalyses the reaction Endonucleolytic cleavage of RNA, removing 21 and 42 nucleotides, respectively, from the 5'- and 3'-termini of a 5S-rRNA precursor.. Its function is as follows. Required for correct processing of both the 5' and 3' ends of 5S rRNA precursor. Cleaves both sides of a double-stranded region yielding mature 5S rRNA in one step. The polypeptide is Ribonuclease M5 (Bacillus anthracis).